Here is a 191-residue protein sequence, read N- to C-terminus: Ribonuclease HII (191 aa).

Positions 16–191 (INLIGIDEAG…KLHRKSFKLL (176 aa)) constitute an RNase H type-2 domain. Residues Asp22, Glu23, and Asp110 each coordinate a divalent metal cation.

This sequence belongs to the RNase HII family. Mn(2+) serves as cofactor. The cofactor is Mg(2+).

Its subcellular location is the cytoplasm. The catalysed reaction is Endonucleolytic cleavage to 5'-phosphomonoester.. Endonuclease that specifically degrades the RNA of RNA-DNA hybrids. The polypeptide is Ribonuclease HII (Campylobacter jejuni subsp. jejuni serotype O:6 (strain 81116 / NCTC 11828)).